The sequence spans 256 residues: Small ribosomal subunit protein eS1 (256 aa).

A compositionally biased stretch (basic residues) spans 1–18; sequence MAVGKNKRLSKGKKGVKK. The interval 1 to 21 is disordered; sequence MAVGKNKRLSKGKKGVKKRTV. An N-acetylalanine; partial modification is found at Ala2.

It belongs to the eukaryotic ribosomal protein eS1 family. Component of the small ribosomal subunit. Mature ribosomes consist of a small (40S) and a large (60S) subunit. The 40S subunit contains about 33 different proteins and 1 molecule of RNA (18S). The 60S subunit contains about 49 different proteins and 3 molecules of RNA (25S, 5.8S and 5S).

The protein localises to the cytoplasm. This Neosartorya fischeri (strain ATCC 1020 / DSM 3700 / CBS 544.65 / FGSC A1164 / JCM 1740 / NRRL 181 / WB 181) (Aspergillus fischerianus) protein is Small ribosomal subunit protein eS1 (rps1).